A 289-amino-acid chain; its full sequence is 4-hydroxy-3-methylbut-2-enyl diphosphate reductase (289 aa).

Cys12 is a binding site for [4Fe-4S] cluster. His41 and His84 together coordinate (2E)-4-hydroxy-3-methylbut-2-enyl diphosphate. The dimethylallyl diphosphate site is built by His41 and His84. Residues His41 and His84 each contribute to the isopentenyl diphosphate site. Cys106 is a [4Fe-4S] cluster binding site. Residue His134 participates in (2E)-4-hydroxy-3-methylbut-2-enyl diphosphate binding. Residue His134 participates in dimethylallyl diphosphate binding. Residue His134 participates in isopentenyl diphosphate binding. The active-site Proton donor is Glu136. Ser172 contributes to the (2E)-4-hydroxy-3-methylbut-2-enyl diphosphate binding site. [4Fe-4S] cluster is bound at residue Cys200. (2E)-4-hydroxy-3-methylbut-2-enyl diphosphate contacts are provided by Ser229, Asn231, and Ser273. Residues Ser229, Asn231, and Ser273 each contribute to the dimethylallyl diphosphate site. Ser229, Asn231, and Ser273 together coordinate isopentenyl diphosphate.

It belongs to the IspH family. [4Fe-4S] cluster is required as a cofactor.

It carries out the reaction isopentenyl diphosphate + 2 oxidized [2Fe-2S]-[ferredoxin] + H2O = (2E)-4-hydroxy-3-methylbut-2-enyl diphosphate + 2 reduced [2Fe-2S]-[ferredoxin] + 2 H(+). The catalysed reaction is dimethylallyl diphosphate + 2 oxidized [2Fe-2S]-[ferredoxin] + H2O = (2E)-4-hydroxy-3-methylbut-2-enyl diphosphate + 2 reduced [2Fe-2S]-[ferredoxin] + 2 H(+). It participates in isoprenoid biosynthesis; dimethylallyl diphosphate biosynthesis; dimethylallyl diphosphate from (2E)-4-hydroxy-3-methylbutenyl diphosphate: step 1/1. It functions in the pathway isoprenoid biosynthesis; isopentenyl diphosphate biosynthesis via DXP pathway; isopentenyl diphosphate from 1-deoxy-D-xylulose 5-phosphate: step 6/6. Catalyzes the conversion of 1-hydroxy-2-methyl-2-(E)-butenyl 4-diphosphate (HMBPP) into a mixture of isopentenyl diphosphate (IPP) and dimethylallyl diphosphate (DMAPP). Acts in the terminal step of the DOXP/MEP pathway for isoprenoid precursor biosynthesis. This Opitutus terrae (strain DSM 11246 / JCM 15787 / PB90-1) protein is 4-hydroxy-3-methylbut-2-enyl diphosphate reductase.